Here is a 591-residue protein sequence, read N- to C-terminus: Probable translation initiation factor IF-2 (591 aa).

The tr-type G domain occupies 7 to 223 (LRTPIVCVMG…LLGLAQRFLE (217 aa)). Residues 16 to 23 (GHVDHGKT) are G1. 16–23 (GHVDHGKT) serves as a coordination point for GTP. The G2 stretch occupies residues 41 to 45 (AITQH). The segment at 78-81 (DTPG) is G3. GTP-binding positions include 78 to 82 (DTPGH) and 132 to 135 (NKID). A G4 region spans residues 132 to 135 (NKID). Positions 200–202 (SAI) are G5.

This sequence belongs to the TRAFAC class translation factor GTPase superfamily. Classic translation factor GTPase family. IF-2 subfamily.

Its function is as follows. Function in general translation initiation by promoting the binding of the formylmethionine-tRNA to ribosomes. Seems to function along with eIF-2. The polypeptide is Probable translation initiation factor IF-2 (Methanococcoides burtonii (strain DSM 6242 / NBRC 107633 / OCM 468 / ACE-M)).